A 162-amino-acid polypeptide reads, in one-letter code: Caveolin-2 (162 aa).

The Cytoplasmic segment spans residues 1–86 (MGLETEKADV…FEISKYVMYK (86 aa)). Tyrosine 19 is subject to Phosphotyrosine; by SRC. Phosphoserine is present on residues serine 20 and serine 23. A Phosphotyrosine; by SRC modification is found at tyrosine 27. At serine 36 the chain carries Phosphoserine. Residues 87-107 (FLTVFLAIPLAFLAGILFATL) constitute an intramembrane region (helical). Residues 108-162 (SCLHIWIIMPFVKTCLMVLPSVQTIWKSVTDAIIAPLCTSIGRSFSSVSLQLSQD) are Cytoplasmic-facing.

The protein belongs to the caveolin family. As to quaternary structure, monomer or homodimer. Interacts with CAV1; the interaction forms a stable heterooligomeric complex that is required for targeting to lipid rafts and for caveolae formation. Tyrosine phosphorylated forms do not form heterooligomers with the Tyr-19-phosphorylated form existing as a monomer or dimer, and the Tyr-27-form as a monomer only. Interacts (tyrosine phosphorylated form) with the SH2 domain-containing proteins, RASA1, NCK1 and SRC. Interacts (tyrosine phosphorylated form) with INSR, the interaction (Tyr-27-phosphorylated form) is increased on insulin stimulation. Interacts (Tyr-19 phosphorylated form) with MAPK1 (phosphorylated form); the interaction, promoted by insulin, leads to nuclear location and MAPK1 activation. Interacts with STAT3; the interaction is increased on insulin-induced tyrosine phosphorylation leading to STAT activation. In terms of processing, phosphorylated on serine and tyrosine residues. CAV1 promotes phosphorylation on Ser-23 which then targets the complex to the plasma membrane, lipid rafts and caveolae. Phosphorylation on Ser-36 appears to modulate mitosis in endothelial cells. Phosphorylation on both Tyr-19 and Tyr-27 is required for insulin-induced 'Ser-727' phosphorylation of STAT3 and its activation. Phosphorylation on Tyr-19 is required for insulin-induced phosphorylation of MAPK1 and DNA binding of STAT3. Tyrosine phosphorylation is induced by both EGF and insulin (By. similarity).

The protein resides in the nucleus. It localises to the cytoplasm. It is found in the golgi apparatus membrane. Its subcellular location is the cell membrane. The protein localises to the membrane. The protein resides in the caveola. Functionally, may act as a scaffolding protein within caveolar membranes. Interacts directly with G-protein alpha subunits and can functionally regulate their activity. Acts as an accessory protein in conjunction with CAV1 in targeting to lipid rafts and driving caveolae formation. The Ser-36 phosphorylated form has a role in modulating mitosis in endothelial cells. Positive regulator of cellular mitogenesis of the MAPK signaling pathway. Required for the insulin-stimulated nuclear translocation and activation of MAPK1 and STAT3, and the subsequent regulation of cell cycle progression. This Callithrix jacchus (White-tufted-ear marmoset) protein is Caveolin-2 (CAV2).